The primary structure comprises 251 residues: Triosephosphate isomerase (251 aa).

Substrate is bound at residue 9 to 11 (NWK). Histidine 93 (electrophile) is an active-site residue. Glutamate 163 functions as the Proton acceptor in the catalytic mechanism. Substrate-binding positions include glycine 169, serine 209, and 230-231 (GG).

This sequence belongs to the triosephosphate isomerase family. As to quaternary structure, homodimer.

Its subcellular location is the cytoplasm. The enzyme catalyses D-glyceraldehyde 3-phosphate = dihydroxyacetone phosphate. It functions in the pathway carbohydrate biosynthesis; gluconeogenesis. It participates in carbohydrate degradation; glycolysis; D-glyceraldehyde 3-phosphate from glycerone phosphate: step 1/1. Its function is as follows. Involved in the gluconeogenesis. Catalyzes stereospecifically the conversion of dihydroxyacetone phosphate (DHAP) to D-glyceraldehyde-3-phosphate (G3P). This chain is Triosephosphate isomerase, found in Ruegeria pomeroyi (strain ATCC 700808 / DSM 15171 / DSS-3) (Silicibacter pomeroyi).